The primary structure comprises 761 residues: MLRLPRITRRALSSGALAPHFDRPLPPPPPAPPAPLCALPPLTAPDALAPLTRRTVRHADALVARIAAAPAHPDPAELRRVVKNLDRLSDVLCGVIDMCELVRNVHPDPHWVAAAEKTYETLCSFMNQLNTSTGLYDALVATVSHTFPGNPLSPAELRVAQTFLSDFERSGIQLPPGVRAKFVRHSDNILSLGRTFLSFAAAGPSADTPIEIPEPEVLLAGLSSKFVASLPRKKRKGPALLAPGSWEAQMIGRYADNEEARRLVYIGSMREDKDRVYVLETMLKERAELAHVLGKETWADVALSDKMAKTPQNVLQFLTSLATHHRPSAAADVAALQRLKALSTVSRTSSQLPTVHAWDRDHYAEQYAASLLPNGSLPSITPYFSVGTAMSGLSHMLSRLYGISFKPVSVAHGEVWHPSVRRLDVMDEHGKRIGVIYCDLFSRPGKPSAGAAHYTVRCSRRVDDDPSEGDGLPPGWDQHLGKGMEVQGEALHGKEGKYQLPIVVLTTDFGTVEESGPALLGWNDLETLFHEMGHAIHSMIGQTEFHNVSGTRCATDFVELPSILMEHFISSPAVLSTFATHYTTNEPLPIPLIQAHLQLDQSLKALETHSQILMALLDQKYHSIKHGEQLDSTRVWNELQSQVGVIPPVRGTAWQTQFGHLYGYGATYYSYLFDRAIAGKIWSSLFARGRTGPAAANHDPAAAEDILSREGGEAFKEKVLKWGGGRDPWEMVGDVIGGAEGEQVAKGDEKAMELVGRWMIK.

His-530 is a Zn(2+) binding site. Glu-531 is a catalytic residue. Zn(2+) is bound by residues His-534 and His-537.

The protein belongs to the peptidase M3 family. It depends on Zn(2+) as a cofactor.

It localises to the mitochondrion matrix. The catalysed reaction is Release of an N-terminal octapeptide as second stage of processing of some proteins imported into the mitochondrion.. Functionally, cleaves proteins, imported into the mitochondrion, to their mature size. While most mitochondrial precursor proteins are processed to the mature form in one step by mitochondrial processing peptidase (MPP), the sequential cleavage by MIP of an octapeptide after initial processing by MPP is a required step for a subgroup of nuclear-encoded precursor proteins destined for the matrix or the inner membrane. This is Mitochondrial intermediate peptidase 1 (OCT1) from Cryptococcus neoformans var. neoformans serotype D (strain B-3501A) (Filobasidiella neoformans).